Here is a 423-residue protein sequence, read N- to C-terminus: MAGRVKWVTDIEKSVLINNFEKRGWVQVTENEDWNFYWMSVQTIRNVFSVETGYRLSDDQIVNHFPNHYELTRKDLMVKNIKRYRKELEKEGSPLAEKDENGKYLYLDFVPVTYMLPADYNLFVEEFRKSPSSTWIMKPCGKAQGKGIFLINKLSQIKKWSRDSKTSSFVSQSTKEAYVISLYINNPLLIGGRKFDLRLYVLVSTYRPLRCYMYKLGFCRFCTVKYTPSTSELDNMFVHLTNVAIQKHGEDYNHIHGGKWTVNNLRLYLESTRGREVTSKLFDEIHWIIVQSLKAVAPVMNNDKHCFECYGYDIIIDDKLKPWLIEVNASPSLTSSTANDRILKYNLINDTLNIAVPNGEIPDCKWNKSPPKEVLGNYEILYDEELAQGDGAERELRSRPGQPVGPRTGRSRDSGRNVLTTWK.

The region spanning 1–367 is the TTL domain; sequence MAGRVKWVTD…NGEIPDCKWN (367 aa). Residues K138, 144-145, 181-184, and 194-196 contribute to the ATP site; these read QG, SLYI, and KFD. Residue Q144 coordinates a protein. Residue R220 participates in L-glutamate binding. ATP is bound at residue 241–242; the sequence is TN. K259 lines the L-glutamate pocket. The Mg(2+) site is built by D313, E326, and N328. K344 is a binding site for L-glutamate. The tract at residues 390–423 is disordered; sequence DGAERELRSRPGQPVGPRTGRSRDSGRNVLTTWK.

The protein belongs to the tubulin polyglutamylase family. In terms of assembly, part of the neuronal tubulin polyglutamylase complex which contains TPGS1, TPGS2, TTLL1, LRRC49 and NICN1. Interacts with PCM1, CSTPP1 and LRRC49. It depends on Mg(2+) as a cofactor.

The protein localises to the cytoplasm. The protein resides in the cytoskeleton. It localises to the cilium basal body. It is found in the cilium axoneme. Its subcellular location is the cell projection. The protein localises to the cilium. The protein resides in the flagellum. The catalysed reaction is (L-glutamyl)(n)-gamma-L-glutamyl-L-glutamyl-[protein] + L-glutamate + ATP = (L-glutamyl)(n+1)-gamma-L-glutamyl-L-glutamyl-[protein] + ADP + phosphate + H(+). Its function is as follows. Catalytic subunit of a polyglutamylase complex which modifies tubulin, generating side chains of glutamate on the gamma-carboxyl group of specific glutamate residues within the C-terminal tail of tubulin. Probably involved in the side-chain elongation step of the polyglutamylation reaction rather than the initiation step. Modifies both alpha- and beta-tubulins with a preference for the alpha-tail. Unlike most polyglutamylases of the tubulin--tyrosine ligase family, only displays a catalytic activity when in complex with other proteins as it is most likely lacking domains important for autonomous activity. Part of the neuronal tubulin polyglutamylase complex. Mediates cilia and flagella polyglutamylation which is essential for their biogenesis and motility. Involved in respiratory motile cilia function through the regulation of beating asymmetry. Essential for sperm flagella biogenesis, motility and male fertility. Involved in KLF4 glutamylation which impedes its ubiquitination, thereby leading to somatic cell reprogramming, pluripotency maintenance and embryogenesis. The sequence is that of Polyglutamylase complex subunit TTLL1 (Ttll1) from Rattus norvegicus (Rat).